The sequence spans 495 residues: Glycerol kinase (495 aa).

ADP is bound at residue Thr-11. Residues Thr-11, Thr-12, and Ser-13 each contribute to the ATP site. Thr-11 serves as a coordination point for sn-glycerol 3-phosphate. Arg-15 is an ADP binding site. Sn-glycerol 3-phosphate-binding residues include Arg-81, Glu-82, Tyr-133, and Asp-242. Arg-81, Glu-82, Tyr-133, Asp-242, and Gln-243 together coordinate glycerol. Residues Thr-264 and Gly-307 each coordinate ADP. ATP-binding residues include Thr-264, Gly-307, Gln-311, and Gly-410. Residue Gly-410 coordinates ADP.

The protein belongs to the FGGY kinase family.

It catalyses the reaction glycerol + ATP = sn-glycerol 3-phosphate + ADP + H(+). The protein operates within polyol metabolism; glycerol degradation via glycerol kinase pathway; sn-glycerol 3-phosphate from glycerol: step 1/1. With respect to regulation, inhibited by fructose 1,6-bisphosphate (FBP). In terms of biological role, key enzyme in the regulation of glycerol uptake and metabolism. Catalyzes the phosphorylation of glycerol to yield sn-glycerol 3-phosphate. This Roseobacter denitrificans (strain ATCC 33942 / OCh 114) (Erythrobacter sp. (strain OCh 114)) protein is Glycerol kinase.